The sequence spans 224 residues: Precorrin-2 dehydrogenase (224 aa).

Residues 26-27 (SV) and 47-50 (EFSQ) each bind NAD(+).

This sequence belongs to the precorrin-2 dehydrogenase / sirohydrochlorin ferrochelatase family. In terms of assembly, homodimer.

It catalyses the reaction precorrin-2 + NAD(+) = sirohydrochlorin + NADH + 2 H(+). Its pathway is porphyrin-containing compound metabolism; siroheme biosynthesis; sirohydrochlorin from precorrin-2: step 1/1. Functionally, involved in the archaeal biosynthesis of heme. Catalyzes the oxiation of precorrin-2 into sirohydroclorin. This Methanosarcina barkeri (strain Fusaro / DSM 804) protein is Precorrin-2 dehydrogenase.